Reading from the N-terminus, the 403-residue chain is Phosphoglycerate kinase (403 aa).

Substrate is bound by residues 21-23, Arg-36, 59-62, Arg-119, and Arg-159; these read DFN and HLGR. ATP-binding positions include Lys-214, Gly-301, Glu-332, and 359–362; that span reads GGDS.

The protein belongs to the phosphoglycerate kinase family. As to quaternary structure, monomer.

Its subcellular location is the cytoplasm. It carries out the reaction (2R)-3-phosphoglycerate + ATP = (2R)-3-phospho-glyceroyl phosphate + ADP. Its pathway is carbohydrate degradation; glycolysis; pyruvate from D-glyceraldehyde 3-phosphate: step 2/5. This is Phosphoglycerate kinase from Lactobacillus delbrueckii subsp. bulgaricus (strain ATCC 11842 / DSM 20081 / BCRC 10696 / JCM 1002 / NBRC 13953 / NCIMB 11778 / NCTC 12712 / WDCM 00102 / Lb 14).